The chain runs to 174 residues: Regenerating islet-derived protein 3-alpha (174 aa).

An N-terminal signal peptide occupies residues 1–25 (MLPRLSFNNVSWTLLYYLFIFQVRG). Positions 26–36 (EDSQKAVPSTR) are excised as a propeptide. 3 disulfides stabilise this stretch: Cys39–Cys50, Cys67–Cys170, and Cys145–Cys162. Positions 46–171 (YRSYCYTLVT…CDVELPFVCK (126 aa)) constitute a C-type lectin domain. The interval 102–117 (WIWLHDPTMGQQPNGG) is sufficient to activate EXTL3. Zn(2+) contacts are provided by His106 and Glu120.

In terms of assembly, forms a hexameric membrane-permeabilizing oligomeric pore on membrane phospholipids. The hexamer is formed by three dimers related by helical symmetry. Forms filaments, filamentation traps pore complexes and limits damage to host cells. Interacts with EXTL3. In terms of processing, proteolytic processing by trypsin removes an inhibitory N-terminal propeptide and is essential for peptidoglycan binding and antibacterial activity. Low expression found in healthy pancreas.

The protein localises to the secreted. In terms of biological role, bactericidal C-type lectin. The lack of the EPN motif may explain its inability to bind peptidoglycan. Its function is as follows. Acts as a hormone in response to different stimuli like anti-inflammatory signals, such as IL17A, or gut microbiome. Secreted by different cell types to activate its receptor EXTL3 and induce cell specific signaling pathways. Induced by IL17A in keratinocytes, regulates keratinocyte proliferation and differentiation after skin injury via activation of EXTL3-PI3K-AKT signaling pathway. In parallel, inhibits skin inflammation through the inhibition of inflammatory cytokines such as IL6 and TNF. In pancreas, is able to permealize beta-cells membrane and stimulate their proliferation. This chain is Regenerating islet-derived protein 3-alpha (Reg3a), found in Rattus norvegicus (Rat).